The chain runs to 118 residues: MTALNQAHCEACRADAPQVSDEELPVLIKQIPDWNIEVRDGVMQLEKVFLFKNFKFALAFTNAMGEISEAEGHHPGLLTEWGKVTVTWWSHSIKGLHRNDFIMAARTDEVAKTAEGRK.

The protein belongs to the pterin-4-alpha-carbinolamine dehydratase family.

It catalyses the reaction (4aS,6R)-4a-hydroxy-L-erythro-5,6,7,8-tetrahydrobiopterin = (6R)-L-erythro-6,7-dihydrobiopterin + H2O. This Pseudomonas fluorescens (strain ATCC BAA-477 / NRRL B-23932 / Pf-5) protein is Putative pterin-4-alpha-carbinolamine dehydratase.